We begin with the raw amino-acid sequence, 209 residues long: TVP38/TMEM64 family membrane protein slr0305 (209 aa).

The next 5 helical transmembrane spans lie at Leu-15–Leu-35, Ile-39–Ile-59, Leu-110–Leu-130, Val-134–Ala-154, and Leu-171–Thr-191.

It belongs to the TVP38/TMEM64 family.

Its subcellular location is the cell membrane. The protein is TVP38/TMEM64 family membrane protein slr0305 of Synechocystis sp. (strain ATCC 27184 / PCC 6803 / Kazusa).